The chain runs to 81 residues: ATP synthase subunit c, chloroplastic (81 aa).

Helical transmembrane passes span 7–27 (AASV…PGIG) and 57–77 (LAFM…LLFA).

The protein belongs to the ATPase C chain family. As to quaternary structure, F-type ATPases have 2 components, F(1) - the catalytic core - and F(0) - the membrane proton channel. F(1) has five subunits: alpha(3), beta(3), gamma(1), delta(1), epsilon(1). F(0) has four main subunits: a(1), b(1), b'(1) and c(10-14). The alpha and beta chains form an alternating ring which encloses part of the gamma chain. F(1) is attached to F(0) by a central stalk formed by the gamma and epsilon chains, while a peripheral stalk is formed by the delta, b and b' chains.

The protein resides in the plastid. It is found in the chloroplast thylakoid membrane. F(1)F(0) ATP synthase produces ATP from ADP in the presence of a proton or sodium gradient. F-type ATPases consist of two structural domains, F(1) containing the extramembraneous catalytic core and F(0) containing the membrane proton channel, linked together by a central stalk and a peripheral stalk. During catalysis, ATP synthesis in the catalytic domain of F(1) is coupled via a rotary mechanism of the central stalk subunits to proton translocation. Its function is as follows. Key component of the F(0) channel; it plays a direct role in translocation across the membrane. A homomeric c-ring of between 10-14 subunits forms the central stalk rotor element with the F(1) delta and epsilon subunits. This Staurastrum punctulatum (Green alga) protein is ATP synthase subunit c, chloroplastic.